Here is a 102-residue protein sequence, read N- to C-terminus: uncharacterized protein (102 aa).

2 consecutive transmembrane segments (helical) span residues 24–44 (AFIV…PVLT) and 55–75 (IGAV…TWIL).

The protein resides in the cell membrane. This is an uncharacterized protein from Bacillus subtilis (strain 168).